Here is a 107-residue protein sequence, read N- to C-terminus: Potassium voltage-gated channel subfamily E member 3 (107 aa).

3 N-linked (GlcNAc...) asparagine glycosylation sites follow: Asn-5, Asn-22, and Asn-45. The interval 31–54 (CRPGPGPGSGTGPDNQTEDHRASL) is disordered. A helical transmembrane segment spans residues 61-81 (SYMYILFVMFLFAVTVGSLIL). Residues 72-83 (FAVTVGSLILGY) are interaction with KCNQ1. Topologically, residues 82–103 (GYTRSRKVDKRSDPYHVYIKNR) are cytoplasmic.

This sequence belongs to the potassium channel KCNE family. As to quaternary structure, interacts with KCNB1. Interacts with KCNC2. Associates with KCNC4/Kv3.4. Interacts with KCNQ1; associates with a KCNQ1:KCNE3 stoichiometry of 4:4; produces a current with nearly instantaneous activation with a linear current-voltage relationship and alters membrane raft localization; affects KCNQ1 structure and gating properties.

Its subcellular location is the cell membrane. It is found in the cytoplasm. It localises to the perikaryon. The protein resides in the cell projection. The protein localises to the dendrite. Its subcellular location is the membrane raft. Functionally, ancillary protein that functions as a regulatory subunit of the voltage-gated potassium (Kv) channel complex composed of pore-forming and potassium-conducting alpha subunits and of regulatory beta subunits. KCNE3 beta subunit modulates the gating kinetics and enhances stability of the channel complex. Alters the gating of the delayed rectifier Kv channel containing KCNB1 alpha subunit. Associates with KCNC4/Kv3.4 alpha subunit to form the subthreshold Kv channel in skeletal muscle and to establish the resting membrane potential (RMP) in muscle cells. Association with KCNQ1/KCLQT1 alpha subunit may form the intestinal cAMP-stimulated potassium channel involved in chloride secretion that produces a current with nearly instantaneous activation with a linear current-voltage relationship. This is Potassium voltage-gated channel subfamily E member 3 from Rattus norvegicus (Rat).